Here is a 264-residue protein sequence, read N- to C-terminus: Thiazole synthase (264 aa).

Lysine 106 serves as the catalytic Schiff-base intermediate with DXP. Residues glycine 167, 193–194 (AG), and 215–216 (NT) each bind 1-deoxy-D-xylulose 5-phosphate.

Belongs to the ThiG family. Homotetramer. Forms heterodimers with either ThiH or ThiS.

It localises to the cytoplasm. It catalyses the reaction [ThiS sulfur-carrier protein]-C-terminal-Gly-aminoethanethioate + 2-iminoacetate + 1-deoxy-D-xylulose 5-phosphate = [ThiS sulfur-carrier protein]-C-terminal Gly-Gly + 2-[(2R,5Z)-2-carboxy-4-methylthiazol-5(2H)-ylidene]ethyl phosphate + 2 H2O + H(+). It participates in cofactor biosynthesis; thiamine diphosphate biosynthesis. Its function is as follows. Catalyzes the rearrangement of 1-deoxy-D-xylulose 5-phosphate (DXP) to produce the thiazole phosphate moiety of thiamine. Sulfur is provided by the thiocarboxylate moiety of the carrier protein ThiS. In vitro, sulfur can be provided by H(2)S. The protein is Thiazole synthase of Xanthomonas oryzae pv. oryzae (strain MAFF 311018).